The primary structure comprises 366 residues: Ribosomal RNA large subunit methyltransferase M (366 aa).

S-adenosyl-L-methionine is bound by residues S188, 221 to 224 (CPGG), D240, D260, and D277. The active-site Proton acceptor is the K306.

It belongs to the class I-like SAM-binding methyltransferase superfamily. RNA methyltransferase RlmE family. RlmM subfamily. Monomer.

Its subcellular location is the cytoplasm. It carries out the reaction cytidine(2498) in 23S rRNA + S-adenosyl-L-methionine = 2'-O-methylcytidine(2498) in 23S rRNA + S-adenosyl-L-homocysteine + H(+). In terms of biological role, catalyzes the 2'-O-methylation at nucleotide C2498 in 23S rRNA. The polypeptide is Ribosomal RNA large subunit methyltransferase M (Citrobacter koseri (strain ATCC BAA-895 / CDC 4225-83 / SGSC4696)).